A 445-amino-acid chain; its full sequence is Xylose isomerase (445 aa).

Catalysis depends on residues His99 and Asp102. 7 residues coordinate Mg(2+): Glu230, Glu266, His269, Asp294, Asp305, Asp307, and Asp337.

It belongs to the xylose isomerase family. In terms of assembly, homotetramer. Requires Mg(2+) as cofactor.

Its subcellular location is the cytoplasm. It carries out the reaction alpha-D-xylose = alpha-D-xylulofuranose. In Geobacillus kaustophilus (strain HTA426), this protein is Xylose isomerase.